The following is a 128-amino-acid chain: MRHRKSGRHLSRTSSHRKAMFQNMAVSLFEHELIKTTLPKAKELRRVAEPLITLAKEDSVANRRLAFDRTRSKEIVGKLFNDLGKRYATRQGGYLRILKCGFRAGDNAPMAYVELVDRPVGGSVEPAE.

Belongs to the bacterial ribosomal protein bL17 family. Part of the 50S ribosomal subunit. Contacts protein L32.

In Pseudomonas savastanoi pv. phaseolicola (strain 1448A / Race 6) (Pseudomonas syringae pv. phaseolicola (strain 1448A / Race 6)), this protein is Large ribosomal subunit protein bL17.